A 47-amino-acid chain; its full sequence is Defensin-like protein 2 (47 aa).

4 disulfide bridges follow: Cys-5-Cys-47, Cys-16-Cys-36, Cys-22-Cys-43, and Cys-26-Cys-45.

This sequence belongs to the DEFL family.

Functionally, fabatins have antibacterial activity against Gram-positive and Gram-negative bacteria. High activity against P.aeruginosa. No activity against S.cerevisiae and C.albicans. The polypeptide is Defensin-like protein 2 (Vicia faba (Broad bean)).